Consider the following 142-residue polypeptide: Small heat shock protein IbpB (142 aa).

Residues 26 to 137 enclose the sHSP domain; sequence SGESQSFPPY…APQRIAINER (112 aa).

The protein belongs to the small heat shock protein (HSP20) family. In terms of assembly, homodimer. Forms homomultimers of about 100-150 subunits at optimal growth temperatures. Conformation changes to oligomers at high temperatures or high ionic concentrations. The decrease in size of the multimers is accompanied by an increase in chaperone activity.

It is found in the cytoplasm. Its function is as follows. Associates with aggregated proteins, together with IbpA, to stabilize and protect them from irreversible denaturation and extensive proteolysis during heat shock and oxidative stress. Aggregated proteins bound to the IbpAB complex are more efficiently refolded and reactivated by the ATP-dependent chaperone systems ClpB and DnaK/DnaJ/GrpE. Its activity is ATP-independent. The polypeptide is Small heat shock protein IbpB (Salmonella newport (strain SL254)).